We begin with the raw amino-acid sequence, 253 residues long: 5'-nucleotidase SurE (253 aa).

A divalent metal cation is bound by residues D8, D9, S40, and N93.

The protein belongs to the SurE nucleotidase family. A divalent metal cation is required as a cofactor.

Its subcellular location is the cytoplasm. It carries out the reaction a ribonucleoside 5'-phosphate + H2O = a ribonucleoside + phosphate. In terms of biological role, nucleotidase that shows phosphatase activity on nucleoside 5'-monophosphates. The polypeptide is 5'-nucleotidase SurE (Methylobacterium nodulans (strain LMG 21967 / CNCM I-2342 / ORS 2060)).